The chain runs to 446 residues: Trigger factor (446 aa).

Residues 161–246 (GDRLTIDFKG…VSKVERSELP (86 aa)) enclose the PPIase FKBP-type domain. The tract at residues 422-446 (VSYEDAVKPRTAPAEQAEDGEQSAE) is disordered. Acidic residues predominate over residues 437–446 (QAEDGEQSAE).

The protein belongs to the FKBP-type PPIase family. Tig subfamily.

It is found in the cytoplasm. The catalysed reaction is [protein]-peptidylproline (omega=180) = [protein]-peptidylproline (omega=0). In terms of biological role, involved in protein export. Acts as a chaperone by maintaining the newly synthesized protein in an open conformation. Functions as a peptidyl-prolyl cis-trans isomerase. The protein is Trigger factor of Hahella chejuensis (strain KCTC 2396).